A 534-amino-acid chain; its full sequence is Prolyl 4-hydroxylase subunit alpha-1 (534 aa).

The N-terminal stretch at 1-17 is a signal peptide; sequence MIWGVLMMGILLPQCSA. A glycan (N-linked (GlcNAc...) asparagine) is linked at Asn-113. The TPR repeat unit spans residues 205-238; it reads VSVLDYLSYAVYQQGDLDKALLLTKKLLELDPEH. The N-linked (GlcNAc...) asparagine glycan is linked to Asn-259. One can recognise a Fe2OG dioxygenase domain in the interval 411-519; sequence TAEELQVANY…KWVSNKWLHE (109 aa). Fe cation-binding residues include His-429, Asp-431, and His-500. Lys-510 provides a ligand contact to 2-oxoglutarate.

It belongs to the P4HA family. In terms of assembly, heterotetramer of two alpha-1 chains and two beta chains (P4HB)(the beta chain is the multi-functional PDI), where P4HB plays the role of a structural subunit; this tetramer catalyzes the formation of 4-hydroxyproline in collagen. The cofactor is Fe(2+). Requires L-ascorbate as cofactor.

Its subcellular location is the endoplasmic reticulum lumen. It carries out the reaction L-prolyl-[collagen] + 2-oxoglutarate + O2 = trans-4-hydroxy-L-prolyl-[collagen] + succinate + CO2. Functionally, catalyzes the post-translational formation of 4-hydroxyproline in -Xaa-Pro-Gly- sequences in collagens and other proteins. The sequence is that of Prolyl 4-hydroxylase subunit alpha-1 (P4ha1) from Rattus norvegicus (Rat).